Reading from the N-terminus, the 430-residue chain is Serine--tRNA ligase (430 aa).

Position 237 to 239 (237 to 239 (TAE)) interacts with L-serine. ATP is bound at residue 268-270 (RSE). Glu-291 is a binding site for L-serine. 355 to 358 (EISS) contributes to the ATP binding site. Residue Ser-391 participates in L-serine binding.

This sequence belongs to the class-II aminoacyl-tRNA synthetase family. Type-1 seryl-tRNA synthetase subfamily. Homodimer. The tRNA molecule binds across the dimer.

The protein resides in the cytoplasm. It carries out the reaction tRNA(Ser) + L-serine + ATP = L-seryl-tRNA(Ser) + AMP + diphosphate + H(+). The enzyme catalyses tRNA(Sec) + L-serine + ATP = L-seryl-tRNA(Sec) + AMP + diphosphate + H(+). Its pathway is aminoacyl-tRNA biosynthesis; selenocysteinyl-tRNA(Sec) biosynthesis; L-seryl-tRNA(Sec) from L-serine and tRNA(Sec): step 1/1. Its function is as follows. Catalyzes the attachment of serine to tRNA(Ser). Is also able to aminoacylate tRNA(Sec) with serine, to form the misacylated tRNA L-seryl-tRNA(Sec), which will be further converted into selenocysteinyl-tRNA(Sec). The polypeptide is Serine--tRNA ligase (Klebsiella pneumoniae subsp. pneumoniae (strain ATCC 700721 / MGH 78578)).